The primary structure comprises 236 residues: WUSCHEL-related homeobox 4 (236 aa).

The homeobox; WUS-type DNA-binding region spans 88 to 152; that stretch reads AGTTRWNPSA…NHKARERQKQ (65 aa). The disordered stretch occupies residues 169-188; sequence PATANETKEAPEKKEKDVED. The span at 174–187 shows a compositional bias: basic and acidic residues; that stretch reads ETKEAPEKKEKDVE.

This sequence belongs to the WUS homeobox family.

The protein localises to the nucleus. Functionally, transcription factor which may be involved in developmental processes. In Oryza sativa subsp. indica (Rice), this protein is WUSCHEL-related homeobox 4 (WOX4).